The chain runs to 295 residues: Shikimate dehydrogenase (NADP(+)) (295 aa).

Shikimate-binding positions include serine 18–serine 20 and threonine 66. Lysine 70 (proton acceptor) is an active-site residue. Asparagine 91 and aspartate 106 together coordinate shikimate. NADP(+) is bound by residues glycine 130–alanine 134 and methionine 235. Position 237 (tyrosine 237) interacts with shikimate. Glycine 258 is a binding site for NADP(+).

It belongs to the shikimate dehydrogenase family. As to quaternary structure, homodimer.

The catalysed reaction is shikimate + NADP(+) = 3-dehydroshikimate + NADPH + H(+). The protein operates within metabolic intermediate biosynthesis; chorismate biosynthesis; chorismate from D-erythrose 4-phosphate and phosphoenolpyruvate: step 4/7. Functionally, involved in the biosynthesis of the chorismate, which leads to the biosynthesis of aromatic amino acids. Catalyzes the reversible NADPH linked reduction of 3-dehydroshikimate (DHSA) to yield shikimate (SA). This is Shikimate dehydrogenase (NADP(+)) from Chlorobium phaeobacteroides (strain DSM 266 / SMG 266 / 2430).